A 229-amino-acid polypeptide reads, in one-letter code: Zinc finger matrin-type protein 4 (229 aa).

Matrin-type zinc fingers lie at residues 14–44 (SYCK…KVRL), 72–106 (DKNK…LKLL), 145–175 (RYCG…NAAR), and 198–228 (YRCT…NLKN).

It localises to the nucleus. This chain is Zinc finger matrin-type protein 4 (Zmat4), found in Mus musculus (Mouse).